A 423-amino-acid chain; its full sequence is T-box transcription factor T-A (423 aa).

Residues 44–212 (LWTKFKELTN…HNPFAKAFLD (169 aa)) constitute a DNA-binding region (T-box). Positions 215–227 (ERSDHKEVPDHST) are enriched in basic and acidic residues. Disordered stretches follow at residues 215–234 (ERSD…QSGY) and 280–304 (AAPY…SSGS). Residues 290-304 (RSTTTNNYMDNSSGS) show a composition bias toward polar residues.

As to quaternary structure, monomer. Binds DNA as a monomer. First expressed at the dorsal side of the blastula embryo. Expressed in the germ ring, shield and chordamesoderm during gastrulation and is restricted to the notochord and tailbud during somitogenesis (at protein level).

It is found in the nucleus. In terms of biological role, involved in the transcriptional regulation of genes required for mesoderm differentiation, including itself. Indispensable for the formation of the notochord and the tail structure. Functions together with tbx16/spadetail in development of trunk and tail mesoderm. Functions by itself early in development to repress medial floor plate and promote notochord fate but at later times, functions together with tbx16/spadetail to promote medial floor plate formation. Acts in a parallel pathway to, but cooperates with, non-canonical wnt-signaling during tail formation. Required for the morphogenesis of Kupffer's vesicle and regulates left-right asymmetry. This is T-box transcription factor T-A (tbxta) from Danio rerio (Zebrafish).